The following is a 100-amino-acid chain: Protein RnfH (100 aa).

The protein belongs to the UPF0125 (RnfH) family.

This chain is Protein RnfH, found in Actinobacillus succinogenes (strain ATCC 55618 / DSM 22257 / CCUG 43843 / 130Z).